A 552-amino-acid polypeptide reads, in one-letter code: Thermosome subunit beta (552 aa).

It belongs to the TCP-1 chaperonin family. In terms of assembly, forms a Heterooligomeric complex of two stacked nine-membered rings; one of alpha and the other of beta subunits. The N-terminus is blocked.

Molecular chaperone; binds unfolded polypeptides in vitro, and has a weak ATPase activity. This Sulfurisphaera tokodaii (strain DSM 16993 / JCM 10545 / NBRC 100140 / 7) (Sulfolobus tokodaii) protein is Thermosome subunit beta (thsB).